A 166-amino-acid chain; its full sequence is Endoribonuclease YbeY (166 aa).

Zn(2+) contacts are provided by H111, H115, and H121. The interval 141–166 (LGYPDPYADDESADHPHSDTPSKDHE) is disordered. The span at 153–166 (ADHPHSDTPSKDHE) shows a compositional bias: basic and acidic residues.

This sequence belongs to the endoribonuclease YbeY family. The cofactor is Zn(2+).

Its subcellular location is the cytoplasm. Its function is as follows. Single strand-specific metallo-endoribonuclease involved in late-stage 70S ribosome quality control and in maturation of the 3' terminus of the 16S rRNA. This Pseudomonas syringae pv. tomato (strain ATCC BAA-871 / DC3000) protein is Endoribonuclease YbeY.